Consider the following 119-residue polypeptide: Holo-[acyl-carrier-protein] synthase (119 aa).

Mg(2+) contacts are provided by Asp-5 and Glu-51.

This sequence belongs to the P-Pant transferase superfamily. AcpS family. The cofactor is Mg(2+).

The protein localises to the cytoplasm. It catalyses the reaction apo-[ACP] + CoA = holo-[ACP] + adenosine 3',5'-bisphosphate + H(+). Functionally, transfers the 4'-phosphopantetheine moiety from coenzyme A to a Ser of acyl-carrier-protein. The chain is Holo-[acyl-carrier-protein] synthase from Helicobacter pylori (strain ATCC 700392 / 26695) (Campylobacter pylori).